The primary structure comprises 132 residues: ATP synthase epsilon chain, chloroplastic (132 aa).

This sequence belongs to the ATPase epsilon chain family. In terms of assembly, F-type ATPases have 2 components, CF(1) - the catalytic core - and CF(0) - the membrane proton channel. CF(1) has five subunits: alpha(3), beta(3), gamma(1), delta(1), epsilon(1). CF(0) has three main subunits: a, b and c.

The protein resides in the plastid. The protein localises to the chloroplast thylakoid membrane. Functionally, produces ATP from ADP in the presence of a proton gradient across the membrane. The polypeptide is ATP synthase epsilon chain, chloroplastic (Pylaiella littoralis (Seaweed)).